A 690-amino-acid polypeptide reads, in one-letter code: Ectopic P granules protein 2 (690 aa).

Coiled coils occupy residues 20–181 (IELA…EREV), 359–409 (ELLR…TIQE), 458–494 (LESG…SLLL), and 560–643 (ATIE…ETKR). The LIR 1 signature appears at 61–64 (YSTL). Positions 381-385 (DFKIL) are required for interaction with lgg-1. A disordered region spans residues 666–690 (EELDEEPKASTESEEKAEWEMVDEE). Over residues 671–684 (EPKASTESEEKAEW) the composition is skewed to basic and acidic residues. The short motif at 684-687 (WEMV) is the LIR 2 element.

As to quaternary structure, interacts with sepa-1. Interacts (via the LIR motifs) with lgg-1 and lgg-2. Shows strong interaction with lgg-1 and weak interaction with lgg-2.

The protein localises to the cytoplasm. Functionally, involved in autophagy. Thought to act as an adapter protein that brings PGL granules to autophagic structures containing lgg-1. Association with other adapters such as sepa-1 is required for the accumulation and degradation of germ cell specific P-granules by autophagy in somatic cells. This ensures exclusive localization of the P-granules in germ cells. May also play a role in the removal of sepa-1 from somatic cells. The polypeptide is Ectopic P granules protein 2 (Caenorhabditis elegans).